The chain runs to 353 residues: RNA 3'-terminal phosphate cyclase (353 aa).

ATP-binding positions include Q100 and 289-292; that span reads HMSD. The active-site Tele-AMP-histidine intermediate is H315.

Belongs to the RNA 3'-terminal cyclase family. Type 1 subfamily.

The protein resides in the cytoplasm. The enzyme catalyses a 3'-end 3'-phospho-ribonucleotide-RNA + ATP = a 3'-end 2',3'-cyclophospho-ribonucleotide-RNA + AMP + diphosphate. Catalyzes the conversion of 3'-phosphate to a 2',3'-cyclic phosphodiester at the end of RNA. The mechanism of action of the enzyme occurs in 3 steps: (A) adenylation of the enzyme by ATP; (B) transfer of adenylate to an RNA-N3'P to produce RNA-N3'PP5'A; (C) and attack of the adjacent 2'-hydroxyl on the 3'-phosphorus in the diester linkage to produce the cyclic end product. The biological role of this enzyme is unknown but it is likely to function in some aspects of cellular RNA processing. The protein is RNA 3'-terminal phosphate cyclase of Ignicoccus hospitalis (strain KIN4/I / DSM 18386 / JCM 14125).